The sequence spans 207 residues: Nitrile hydratase subunit alpha (207 aa).

Cys-110, Cys-113, Ser-114, and Cys-115 together coordinate Fe(3+). Cys-113 is subject to Cysteine sulfinic acid (-SO2H). Cysteine sulfenic acid (-SOH) is present on Cys-115.

Belongs to the nitrile hydratase subunit alpha family. In terms of assembly, heterodimer of an alpha and a beta chain. Fe(3+) serves as cofactor. Oxidation on Cys-113 is essential for the activity. Post-translationally, oxidation on Cys-115 stabilizes the Fe-NO ligand coordinated in the inactive form.

It carries out the reaction an aliphatic primary amide = an aliphatic nitrile + H2O. With respect to regulation, inactivated by nitrosylation of the iron center in the dark and activated by photo-induced nitric oxide (NO) release. Inactivated by oxidation of Cys-115 to a sulfenic acid. Its function is as follows. NHase catalyzes the hydration of various nitrile compounds to the corresponding amides. Industrial production of acrylamide is now being developed using some of the enzymes of this class. The polypeptide is Nitrile hydratase subunit alpha (nthA) (Rhodococcus erythropolis (Arthrobacter picolinophilus)).